The following is a 266-amino-acid chain: Methylsterol monooxygenase 2-2 (266 aa).

Transmembrane regions (helical) follow at residues 24–44 (IGSF…FIFL), 71–91 (RLLL…YPVF), and 107–127 (EVSA…YWGH). One can recognise a Fatty acid hydroxylase domain in the interval 113–247 (LFYFIIEDFV…FVYMDWIFGT (135 aa)). The Histidine box-1 signature appears at 127 to 131 (HRILH). Residues 140–144 (HSVHH) carry the Histidine box-2 motif. A helical transmembrane segment spans residues 162 to 182 (ILFLGFATIVGPALTGPHLIT). The Histidine box-3 signature appears at 219–225 (FHDYHHR).

This sequence belongs to the sterol desaturase family. Fe cation is required as a cofactor. In terms of tissue distribution, expressed in shoots, roots, siliques and flowers, and, slightly, in developing seeds.

It is found in the endoplasmic reticulum membrane. The catalysed reaction is 4,4-dimethyl-5alpha-cholest-7-en-3beta-ol + 6 Fe(II)-[cytochrome b5] + 3 O2 + 5 H(+) = 4alpha-carboxy-4beta-methyl-5alpha-cholest-7-ene-3beta-ol + 6 Fe(III)-[cytochrome b5] + 4 H2O. It catalyses the reaction 24-methylidenelophenol + 6 Fe(II)-[cytochrome b5] + 3 O2 + 5 H(+) = 4alpha-carboxy-ergosta-7,24(24(1))-dien-3beta-ol + 6 Fe(III)-[cytochrome b5] + 4 H2O. Its function is as follows. Non-heme iron oxygenase involved in sterols biosynthesis by catalyzing the removal of the second methyl group at the C-4 position. 24-ethylidenelophenol and 24-ethyllophenol are the preferred substrates. Together with SMO2-1, required during embryogenesis, probably by maintaining sterols and auxin homeostasis. This chain is Methylsterol monooxygenase 2-2, found in Arabidopsis thaliana (Mouse-ear cress).